The chain runs to 456 residues: Gustatory receptor for sugar taste 64a (456 aa).

Residues 1–30 (MKGPNLNFRKTPSKDNGVKQVESLARPETP) form a disordered region. Residues 1–91 (MKGPNLNFRK…RESNPRRVRF (91 aa)) are Cytoplasmic-facing. The helical transmembrane segment at 92-114 (AYKSIPMFVTLIFMIATSILFLS) threads the bilayer. Residues 115–128 (MFTHLLKIGITAKN) are Extracellular-facing. A helical transmembrane segment spans residues 129–150 (FVGLVFFGCVLSAYVVFIRLAK). G131 provides a ligand contact to sucrose. Residues 151 to 182 (KWPAVVRIWTRTEIPFTKPPYEIPKRNLSRRV) are Cytoplasmic-facing. The helical transmembrane segment at 183-205 (QLAALAIIGLSLGEHALYQVSAI) threads the bilayer. Positions 196, 197, and 234 each coordinate sucrose. 5 residues coordinate D-maltose: E196, H197, Y234, N253, and T257. At 206–245 (LSYTRRIQMCANITTVPSFNNYMQTNYDYVFQLLPYSPII) the chain is on the extracellular side. The chain crosses the membrane as a helical span at residues 246–271 (AVLILLINGACTFVWNYMDLFIMMIS). Position 257 (T257) interacts with sucrose. The Cytoplasmic segment spans residues 272-318 (KGLSYRFEQITTRIRKLEHEEVCESVFIQIREHYVKMCELLEFVDSA). Residues 319–342 (MSSLILLSCVNNLYFVCYQLLNVF) form a helical membrane-spanning segment. Residues 343–350 (NKLRWPIN) are Extracellular-facing. A helical transmembrane segment spans residues 351–373 (YIYFWYSLLYLIGRTAFVFLTAA). Residue Y353 coordinates sucrose. Y353 is a D-maltose binding site. Residues 374 to 421 (DINEESKRGLGVLRRVSSRSWCVEVERLIFQMTTQTVALSGKKFYFLT) lie on the Cytoplasmic side of the membrane. The chain crosses the membrane as a helical span at residues 422–441 (RRLLFGMAGTIVTYELVLLQ). Residues 442 to 456 (FDEPNRRKGLQPLCA) lie on the Extracellular side of the membrane.

Belongs to the insect chemoreceptor superfamily. Gustatory receptor (GR) family. Gr5a subfamily. In terms of assembly, homotetramer. As to expression, expressed in Gr5a-expressing sugar-sensing cells.

The protein resides in the cell membrane. One of the few identified sugar gustatory receptors identified so far and which promotes the starvation-induced increase of feeding motivation. Required in combination with Gr64f to detect sucrose, maltose, and glucose. In Drosophila melanogaster (Fruit fly), this protein is Gustatory receptor for sugar taste 64a (Gr64a).